The chain runs to 101 residues: UPF0751 protein DSY3086 (101 aa).

Belongs to the UPF0751 family.

This Desulfitobacterium hafniense (strain Y51) protein is UPF0751 protein DSY3086.